The following is a 497-amino-acid chain: CRISPR-associated endodeoxyribonuclease Cas12f1 (497 aa).

Residues 29 to 122 (RKDLSTMSRF…PTYKITTAPI (94 aa)) form a recognition domain (REC) region. A wedge domain (WED) region spans residues 123 to 214 (RLQNNIYKLI…YCIIPYTFPT (92 aa)). The linker stretch occupies residues 215–223 (HETVLDPDK). Positions 224-374 (VMGVDLGVAK…VAINPQYTSQ (151 aa)) are ruvC-I. Catalysis depends on residues D228 and E327. The tract at residues 375–432 (RCSMCGYIEKTNRSSQAVFECKQCGYGSRTICINCRHVQVSGDVCEECGGIVKKENVN) is target nucleic acid-binding (TNB). Positions 376, 379, 395, and 398 each coordinate Zn(2+). Positions 433–453 (ADYNAAKNISTPYIDQIIMEK) are ruvC-II. Residue D434 is part of the active site.

This sequence belongs to the CRISPR-associated endonuclease Cas12f family. An asymmetric homodimer. Guide RNA is probably required for dimerization. Requires Mg(2+) as cofactor. The cofactor is Zn(2+).

In terms of biological role, CRISPR (clustered regularly interspaced short palindromic repeat), is an adaptive immune system that provides protection against mobile genetic elements (viruses, transposable elements and conjugative plasmids). CRISPR clusters contain sequences complementary to antecedent mobile elements and target invading nucleic acids. CRISPR clusters are transcribed and processed into CRISPR RNA (crRNA), which requires a trans-encoded small RNA (tracrRNA), but not this protein. Recognizes a short motif in the CRISPR repeat sequences (the 5' PAM or protospacer adjacent motif, TTC in this organism) to help distinguish self versus nonself, as targets within the CRISPR locus do not have PAMs. Has dsDNA endonuclease activity upon expression in E.coli of this protein, a mini CRISPR array and the probable tracrRNA. Plasmid cleavage is centered around positions 24 base pairs 3' of PAM. The mini system protects E.coli against transformation by foreign plasmids. This chain is CRISPR-associated endodeoxyribonuclease Cas12f1, found in Syntrophomonas palmitatica (strain DSM 18709 / JCM 14374 / NBRC 102128 / MPA).